Consider the following 205-residue polypeptide: Recombination protein RecR (205 aa).

Residues 58 to 75 form a C4-type zinc finger; sequence CSLCQNVTDKEIDPCNIC. In terms of domain architecture, Toprim spans 83 to 182; it reads RVVCVVEAPN…KVTRIARGIP (100 aa).

It belongs to the RecR family.

May play a role in DNA repair. It seems to be involved in an RecBC-independent recombinational process of DNA repair. It may act with RecF and RecO. The polypeptide is Recombination protein RecR (Chloroherpeton thalassium (strain ATCC 35110 / GB-78)).